Reading from the N-terminus, the 351-residue chain is RCC1 repeat-containing protein C10F6.04 (351 aa).

4 RCC1 repeats span residues Met1–Glu48, Ser50–Ala106, Arg108–Asn162, and Glu163–Glu212.

Its subcellular location is the cytoplasm. It is found in the nucleus. This chain is RCC1 repeat-containing protein C10F6.04, found in Schizosaccharomyces pombe (strain 972 / ATCC 24843) (Fission yeast).